The chain runs to 83 residues: Cytotoxin A5 (83 aa).

Residues 1-21 (MKTLLLTMVVVTIVCLDLGYT) form the signal peptide. Intrachain disulfides connect C24-C43, C36-C61, C65-C76, and C77-C82.

It belongs to the three-finger toxin family. Short-chain subfamily. Orphan group XV sub-subfamily. In terms of tissue distribution, expressed by the venom gland.

The protein resides in the secreted. Its subcellular location is the target cell membrane. Its function is as follows. Non-cytotoxic protein that does not show lytic and hemolytic activities, but can induce aggregation and fusion of sphingomyelin vesicles. It binds to integrin alpha-V/beta-3 (ITGAV/ITGB3) with high affinity, and it inhibits osteoclast differentiation and bone resorption in mice, probably due to binding to integrin alpha-V/beta-3. The sequence is that of Cytotoxin A5 from Naja atra (Chinese cobra).